A 112-amino-acid chain; its full sequence is Large ribosomal subunit protein mL53 (112 aa).

Belongs to the mitochondrion-specific ribosomal protein mL53 family. Component of the mitochondrial ribosome large subunit (39S) which comprises a 16S rRNA and about 50 distinct proteins.

It localises to the mitochondrion. The sequence is that of Large ribosomal subunit protein mL53 (MRPL53) from Bos taurus (Bovine).